The sequence spans 91 residues: Large ribosomal subunit protein eL37 (91 aa).

Residues Cys19, Cys22, Cys34, and Cys37 each coordinate Zn(2+). The C4-type zinc finger occupies 19 to 37; it reads CRRCGKSSFHIQKKTCASC.

This sequence belongs to the eukaryotic ribosomal protein eL37 family. The cofactor is Zn(2+).

In terms of biological role, binds to the 23S rRNA. This is Large ribosomal subunit protein eL37 (rpl37) from Dictyostelium discoideum (Social amoeba).